The following is a 100-amino-acid chain: Large ribosomal subunit protein bL21 (100 aa).

This sequence belongs to the bacterial ribosomal protein bL21 family. As to quaternary structure, part of the 50S ribosomal subunit. Contacts protein L20.

In terms of biological role, this protein binds to 23S rRNA in the presence of protein L20. The polypeptide is Large ribosomal subunit protein bL21 (Wolbachia sp. subsp. Brugia malayi (strain TRS)).